The chain runs to 529 residues: Protein PAT1 homolog 2 (529 aa).

A disordered region spans residues 153–183 (QILQQQQRWRRRRSPTARSVPAQKPWSREPA).

The protein belongs to the PAT1 family. Interacts with LSM1.

Its subcellular location is the cytoplasm. It localises to the nucleus. RNA-binding protein that acts as a translational repressor. The chain is Protein PAT1 homolog 2 (Patl2) from Mus musculus (Mouse).